Reading from the N-terminus, the 444-residue chain is Maintenance of mitochondrial morphology protein 1 (444 aa).

Residues Met-1–Gly-110 lie on the Lumenal side of the membrane. The chain crosses the membrane as a helical span at residues Phe-111 to Phe-131. At Ser-132–Glu-444 the chain is on the cytoplasmic side. Residues Pro-207–Pro-419 form the SMP-LTD domain.

This sequence belongs to the MMM1 family. Homodimer. Component of the ER-mitochondria encounter structure (ERMES) or MDM complex, composed of MMM1, MDM10, MDM12 and MDM34. An MMM1 homodimer associates with one molecule of MDM12 on each side in a pairwise head-to-tail manner, and the SMP-LTD domains of MMM1 and MDM12 generate a continuous hydrophobic tunnel for phospholipid trafficking.

It localises to the endoplasmic reticulum membrane. Its function is as follows. Component of the ERMES/MDM complex, which serves as a molecular tether to connect the endoplasmic reticulum (ER) and mitochondria. Components of this complex are involved in the control of mitochondrial shape and protein biogenesis, and function in nonvesicular lipid trafficking between the ER and mitochondria. The MDM12-MMM1 subcomplex functions in the major beta-barrel assembly pathway that is responsible for biogenesis of all outer membrane beta-barrel proteins, and acts in a late step after the SAM complex. The MDM10-MDM12-MMM1 subcomplex further acts in the TOM40-specific pathway after the action of the MDM12-MMM1 complex. Essential for establishing and maintaining the structure of mitochondria and maintenance of mtDNA nucleoids. This is Maintenance of mitochondrial morphology protein 1 from Vanderwaltozyma polyspora (strain ATCC 22028 / DSM 70294 / BCRC 21397 / CBS 2163 / NBRC 10782 / NRRL Y-8283 / UCD 57-17) (Kluyveromyces polysporus).